Consider the following 252-residue polypeptide: 2-succinyl-6-hydroxy-2,4-cyclohexadiene-1-carboxylate synthase (252 aa).

This sequence belongs to the AB hydrolase superfamily. MenH family. Monomer.

It catalyses the reaction 5-enolpyruvoyl-6-hydroxy-2-succinyl-cyclohex-3-ene-1-carboxylate = (1R,6R)-6-hydroxy-2-succinyl-cyclohexa-2,4-diene-1-carboxylate + pyruvate. The protein operates within quinol/quinone metabolism; 1,4-dihydroxy-2-naphthoate biosynthesis; 1,4-dihydroxy-2-naphthoate from chorismate: step 3/7. Its pathway is quinol/quinone metabolism; menaquinone biosynthesis. Its function is as follows. Catalyzes a proton abstraction reaction that results in 2,5-elimination of pyruvate from 2-succinyl-5-enolpyruvyl-6-hydroxy-3-cyclohexene-1-carboxylate (SEPHCHC) and the formation of 2-succinyl-6-hydroxy-2,4-cyclohexadiene-1-carboxylate (SHCHC). The chain is 2-succinyl-6-hydroxy-2,4-cyclohexadiene-1-carboxylate synthase from Escherichia coli (strain SE11).